We begin with the raw amino-acid sequence, 540 residues long: Phenylalanine--tRNA ligase beta subunit (540 aa).

Residues 270–347 (MTPRTLNVPR…IGYGFDKIKS (78 aa)) form the B5 domain. 4 residues coordinate Mg(2+): Asp325, Asp331, Glu334, and Asp335.

This sequence belongs to the phenylalanyl-tRNA synthetase beta subunit family. Type 2 subfamily. In terms of assembly, tetramer of two alpha and two beta subunits. It depends on Mg(2+) as a cofactor.

It localises to the cytoplasm. It carries out the reaction tRNA(Phe) + L-phenylalanine + ATP = L-phenylalanyl-tRNA(Phe) + AMP + diphosphate + H(+). The polypeptide is Phenylalanine--tRNA ligase beta subunit (Methanococcoides burtonii (strain DSM 6242 / NBRC 107633 / OCM 468 / ACE-M)).